The chain runs to 308 residues: Quinolinate synthase (308 aa).

Iminosuccinate contacts are provided by His-21 and Ser-38. Cys-83 provides a ligand contact to [4Fe-4S] cluster. Iminosuccinate is bound by residues 109–111 (YIN) and Ser-126. [4Fe-4S] cluster is bound at residue Cys-170. Residues 196–198 (HPE) and Thr-213 each bind iminosuccinate. Position 263 (Cys-263) interacts with [4Fe-4S] cluster.

This sequence belongs to the quinolinate synthase family. Type 2 subfamily. [4Fe-4S] cluster is required as a cofactor.

It is found in the cytoplasm. It carries out the reaction iminosuccinate + dihydroxyacetone phosphate = quinolinate + phosphate + 2 H2O + H(+). The protein operates within cofactor biosynthesis; NAD(+) biosynthesis; quinolinate from iminoaspartate: step 1/1. Functionally, catalyzes the condensation of iminoaspartate with dihydroxyacetone phosphate to form quinolinate. The chain is Quinolinate synthase from Sulfurisphaera tokodaii (strain DSM 16993 / JCM 10545 / NBRC 100140 / 7) (Sulfolobus tokodaii).